Here is a 1446-residue protein sequence, read N- to C-terminus: Toll-like receptor 7 (1446 aa).

A signal peptide spans 1 to 16 (MAAILLLLLGFSWSLA). Residues 17–1049 (VESALAPKES…QHGIPESYIP (1033 aa)) are Extracellular-facing. LRR repeat units follow at residues 133 to 156 (LQTL…AFEG), 158 to 180 (ATLK…TLEL), 188 to 211 (LKQL…FLCP), 213 to 235 (GNLQ…GFAD), 246 to 270 (GSEL…GISR), 271 to 294 (LRRL…ALAG), 295 to 318 (LASL…LFAG), 320 to 342 (KELR…LFHR), 344 to 368 (EQLL…TFAG), 369 to 392 (LIRL…TFKE), 393 to 416 (LYFL…AFLP), 417 to 440 (LYNL…LFNG), 442 to 464 (YVLS…VFKN), 465 to 488 (CSDL…LQDL), 489 to 511 (AMLR…SFKN), 513 to 535 (HQLT…MFQD), 536 to 559 (LPRL…SFDK), 561 to 582 (FELE…VFAT), 584 to 605 (VSLL…AFIP), 606 to 629 (SNLK…KLQE), 631 to 652 (IRVK…MSIP), 653 to 675 (NTIE…AFVD), and 677 to 699 (ANLA…QLRV). Residues 716-773 (NPFECDCTMDWLQRINNLTTRQHPRVMDMANIECVMPHARGAAVRPLSGLRPQDFLCR) enclose the LRRCT domain. 3 disulfide bridges follow: Cys-722-Cys-772, Cys-796-Cys-802, and Cys-800-Cys-815. LRR repeat units follow at residues 828–851 (PMDS…AFIG), 852–875 (RKNL…TFAS), 876–899 (LASL…EFEQ), 900–923 (LSAL…TLAP), 925–947 (AALE…QMHA), and 951–979 (GTRL…SYVA). An intrachain disulfide couples Cys-966 to Cys-993. Residues 1050 to 1070 (LLAAALALLFLLVVIAMVFAF) traverse the membrane as a helical segment. The Cytoplasmic segment spans residues 1071–1446 (RESLRIWLFA…QGPHVQAYLV (376 aa)). The 138-residue stretch at 1096–1233 (KLYDAVLLHS…HFWEKLRYAL (138 aa)) folds into the TIR domain. 2 disordered regions span residues 1301-1332 (QNYS…NHHL) and 1388-1446 (RPKR…AYLV). Polar residues predominate over residues 1395 to 1413 (HLQQAQAGTLGSKASQAAH). Low complexity predominate over residues 1414–1426 (QQQQQQQQQQQQQ). Polar residues predominate over residues 1427–1439 (PNPTAVSGQQQGP).

Belongs to the Toll-like receptor family. Expressed in the fan-shaped body and the ellipsoid body, which are components of the locomotion center in the CNS (at protein level).

It is found in the cell membrane. Its function is as follows. Toll-related receptor which binds to the neurotrophins NT1 and spz5. Essential for antiviral autophagy, it detects and binds to the vesicular stomatitis virus (vsv) following infection. This role is likely to be independent of the canonical Toll, immune deficiency, and JAK-STAT signaling pathways. Functions in olfactory circuit assembly by promoting synaptic partner matching between olfactory receptor neurons (ORN) axons and projection neurons (PN) dendrites partners in the antennal lobe. Function in the Va1d ORNs is necessary and sufficient for correct targeting to their partner PN dendrites. Also involved in the targeting of other classes of ORN axons. Functions with Toll-6 to regulate motor axon targeting and neuronal survival in the central nervous system (CNS). May be an upstream component of the NF-kappa-B (rel) regulatory cascade. This chain is Toll-like receptor 7, found in Drosophila melanogaster (Fruit fly).